The chain runs to 330 residues: Glycerol-3-phosphate dehydrogenase [NAD(P)+] (330 aa).

Residues Ser14, Phe15, Arg35, and Lys109 each contribute to the NADPH site. Sn-glycerol 3-phosphate contacts are provided by Lys109 and Gly137. An NADPH-binding site is contributed by Ala141. Residues Lys192, Asp248, Ser258, Arg259, and Asn260 each contribute to the sn-glycerol 3-phosphate site. Catalysis depends on Lys192, which acts as the Proton acceptor. Residue Arg259 coordinates NADPH. Leu283 and Glu285 together coordinate NADPH.

It belongs to the NAD-dependent glycerol-3-phosphate dehydrogenase family.

The protein resides in the cytoplasm. The enzyme catalyses sn-glycerol 3-phosphate + NAD(+) = dihydroxyacetone phosphate + NADH + H(+). The catalysed reaction is sn-glycerol 3-phosphate + NADP(+) = dihydroxyacetone phosphate + NADPH + H(+). The protein operates within membrane lipid metabolism; glycerophospholipid metabolism. Catalyzes the reduction of the glycolytic intermediate dihydroxyacetone phosphate (DHAP) to sn-glycerol 3-phosphate (G3P), the key precursor for phospholipid synthesis. The sequence is that of Glycerol-3-phosphate dehydrogenase [NAD(P)+] from Rickettsia massiliae (strain Mtu5).